The sequence spans 127 residues: Group 3 truncated hemoglobin ctb (127 aa).

Tyr64 and His72 together coordinate heme.

The protein belongs to the truncated hemoglobin family. Group III subfamily. As to quaternary structure, monomer. Heme is required as a cofactor.

The protein resides in the cytoplasm. Has been suggested to be involved in cytochrome c peroxidase or P450-like oxygen chemistry or cyanide detoxification. The high oxygen affinity of this protein suggests that it probably does not function as an oxygen transporter. In Campylobacter jejuni subsp. jejuni serotype O:2 (strain ATCC 700819 / NCTC 11168), this protein is Group 3 truncated hemoglobin ctb (ctb).